Reading from the N-terminus, the 204-residue chain is MSSSMDHRVLALAGVAQALQQVRRIAETGHSEAATVRTAVDSVFRVDAATPEGVYGSSADVAPGLRLLHNYFTNQGKDDMLPRLALAVLQLERRFVRDHSTVETVSKGIEAAARQAQTLGDSAHPDVLSALGALYAQTISHLRPKVMVQGNPHYLGQAGVVAEIRALLLAAVRSAVLWRQMGGSLWDFLFAKRAMIEAVARALR.

The protein belongs to the HflD family.

The protein localises to the cytoplasm. Its subcellular location is the cell inner membrane. The protein is High frequency lysogenization protein HflD homolog of Xanthomonas campestris pv. campestris (strain ATCC 33913 / DSM 3586 / NCPPB 528 / LMG 568 / P 25).